The sequence spans 312 residues: DNA-directed RNA polymerase subunit alpha (312 aa).

Residues 1-227 are alpha N-terminal domain (alpha-NTD); it reads MNNFYIKCLK…SFFSSLLENK (227 aa). The tract at residues 243–312 is alpha C-terminal domain (alpha-CTD); that stretch reads PKNPHTNIAI…KNKLGIVLSN (70 aa).

This sequence belongs to the RNA polymerase alpha chain family. In terms of assembly, in plastids the minimal PEP RNA polymerase catalytic core is composed of four subunits: alpha, beta, beta', and beta''. When a (nuclear-encoded) sigma factor is associated with the core the holoenzyme is formed, which can initiate transcription.

Its subcellular location is the plastid. The protein resides in the chloroplast. The enzyme catalyses RNA(n) + a ribonucleoside 5'-triphosphate = RNA(n+1) + diphosphate. Its function is as follows. DNA-dependent RNA polymerase catalyzes the transcription of DNA into RNA using the four ribonucleoside triphosphates as substrates. This Trieres chinensis (Marine centric diatom) protein is DNA-directed RNA polymerase subunit alpha.